The sequence spans 197 residues: Peptidyl-tRNA hydrolase (197 aa).

Tyrosine 17 contributes to the tRNA binding site. Histidine 22 functions as the Proton acceptor in the catalytic mechanism. TRNA contacts are provided by phenylalanine 68, asparagine 70, and asparagine 116.

It belongs to the PTH family. In terms of assembly, monomer.

It is found in the cytoplasm. The catalysed reaction is an N-acyl-L-alpha-aminoacyl-tRNA + H2O = an N-acyl-L-amino acid + a tRNA + H(+). Its function is as follows. Hydrolyzes ribosome-free peptidyl-tRNAs (with 1 or more amino acids incorporated), which drop off the ribosome during protein synthesis, or as a result of ribosome stalling. In terms of biological role, catalyzes the release of premature peptidyl moieties from peptidyl-tRNA molecules trapped in stalled 50S ribosomal subunits, and thus maintains levels of free tRNAs and 50S ribosomes. The polypeptide is Peptidyl-tRNA hydrolase (Yersinia enterocolitica serotype O:8 / biotype 1B (strain NCTC 13174 / 8081)).